The sequence spans 234 residues: Large ribosomal subunit protein uL1 (234 aa).

Belongs to the universal ribosomal protein uL1 family. As to quaternary structure, part of the 50S ribosomal subunit.

In terms of biological role, binds directly to 23S rRNA. The L1 stalk is quite mobile in the ribosome, and is involved in E site tRNA release. Protein L1 is also a translational repressor protein, it controls the translation of the L11 operon by binding to its mRNA. The chain is Large ribosomal subunit protein uL1 from Anaeromyxobacter sp. (strain Fw109-5).